The chain runs to 457 residues: MQKYTSEARQLLALAIPVILAQVAQTAMGFVDTVMAGGYSATDMAAVAIGTSIWLPAILFGHGLLLALTPVIAQLNGSGRRERIAHQVRQGFWLAGFVSVLVMIVLWNAGYIIRSMHNIDPALADKAVGYLRALLWGAPGYLFFQVARNQCEGLAKTKPGMVMGFLGLLVNIPVNYIFIYGHFGMPELGGIGCGVATAAVYWVMFIAMLSYIKHARSMRDIRNEKGFGKPDSIVMKRLIQLGLPIALALFFEVTLFAVVALLVSPLGIVDVAGHQIALNFSSLMFVLPMSLAAAVTIRVGYRLGQGSTLDAQTAARTGLGVGICMAVVTAIFTVTLRKHIALLYNDNPEVVALAAQLMLLAAVYQISDSIQVIGSGILRGYKDTRSIFFITFTAYWVLGLPSGYILALTDLVVDRMGPAGFWMGFIIGLTSAAVLMMLRMRYLQRQPSAIILQRAAR.

The next 12 helical transmembrane spans lie at 11–31, 53–73, 93–113, 127–147, 160–180, 188–208, 243–263, 276–296, 314–334, 350–370, 387–407, and 418–438; these read LLAL…MGFV, IWLP…PVIA, WLAG…GYII, AVGY…FQVA, GMVM…IFIY, LGGI…FIAM, LPIA…ALLV, IALN…AAVT, AART…IFTV, VVAL…SDSI, IFFI…YILA, and PAGF…LMML.

This sequence belongs to the multi antimicrobial extrusion (MATE) (TC 2.A.66.1) family. MdtK subfamily.

It is found in the cell inner membrane. Multidrug efflux pump that functions probably as a Na(+)/drug antiporter. This Salmonella enteritidis PT4 (strain P125109) protein is Multidrug resistance protein MdtK.